The primary structure comprises 138 residues: Glutaredoxin-like protein C5orf63 (138 aa).

Cys41 and Cys44 form a disulfide bridge. Over residues 55-64 the composition is skewed to basic and acidic residues; it reads ENRQPYKDQK. A disordered region spans residues 55-88; the sequence is ENRQPYKDQKLPGTRRRRSPSSPSHPHMASQSGK.

This sequence belongs to the glutaredoxin family. YDR286C subfamily.

This is Glutaredoxin-like protein C5orf63 (C5orf63) from Homo sapiens (Human).